We begin with the raw amino-acid sequence, 1119 residues long: DNA-directed RNA polymerase subunit beta (1119 aa).

Belongs to the RNA polymerase beta chain family. The RNAP catalytic core consists of 2 alpha, 1 beta, 1 beta' and 1 omega subunit. When a sigma factor is associated with the core the holoenzyme is formed, which can initiate transcription.

The enzyme catalyses RNA(n) + a ribonucleoside 5'-triphosphate = RNA(n+1) + diphosphate. DNA-dependent RNA polymerase catalyzes the transcription of DNA into RNA using the four ribonucleoside triphosphates as substrates. The chain is DNA-directed RNA polymerase subunit beta from Thermus thermophilus (strain ATCC 27634 / DSM 579 / HB8).